The primary structure comprises 130 residues: Small ribosomal subunit protein uS11 (130 aa).

Belongs to the universal ribosomal protein uS11 family. As to quaternary structure, part of the 30S ribosomal subunit. Interacts with proteins S7 and S18. Binds to IF-3.

Functionally, located on the platform of the 30S subunit, it bridges several disparate RNA helices of the 16S rRNA. Forms part of the Shine-Dalgarno cleft in the 70S ribosome. In Parasynechococcus marenigrum (strain WH8102), this protein is Small ribosomal subunit protein uS11.